Reading from the N-terminus, the 461-residue chain is Phosphoenolpyruvate carboxylase (461 aa).

Belongs to the PEPCase type 2 family. Homotetramer. It depends on Mg(2+) as a cofactor.

It carries out the reaction oxaloacetate + phosphate = phosphoenolpyruvate + hydrogencarbonate. Its function is as follows. Catalyzes the irreversible beta-carboxylation of phosphoenolpyruvate (PEP) to form oxaloacetate (OAA), a four-carbon dicarboxylic acid source for the tricarboxylic acid cycle. This Pyrobaculum islandicum (strain DSM 4184 / JCM 9189 / GEO3) protein is Phosphoenolpyruvate carboxylase.